We begin with the raw amino-acid sequence, 301 residues long: Beta-1,3-galactosyltransferase 5 (301 aa).

Over 1 to 7 (MAFPKMR) the chain is Cytoplasmic. Residues 8 to 28 (LMYVCLLVLGALCLYFSMYSL) form a helical; Signal-anchor for type II membrane protein membrane-spanning segment. Over 29–301 (NLFKEQSFVY…LLDYWQALEN (273 aa)) the chain is Lumenal. 3 N-linked (GlcNAc...) asparagine glycosylation sites follow: Asn130, Asn174, and Asn231.

Belongs to the glycosyltransferase 31 family.

The protein localises to the golgi apparatus membrane. It catalyses the reaction a globoside Gb4Cer (d18:1(4E)) + UDP-alpha-D-galactose = a globoside GalGb4Cer (d18:1(4E)) + UDP + H(+). It functions in the pathway protein modification; protein glycosylation. Its function is as follows. Catalyzes the transfer of Gal to GlcNAc-based acceptors with a preference for the core3 O-linked glycan GlcNAc(beta1,3)GalNAc structure. Can use glycolipid LC3Cer as an efficient acceptor. The polypeptide is Beta-1,3-galactosyltransferase 5 (B3GALT5) (Pan paniscus (Pygmy chimpanzee)).